We begin with the raw amino-acid sequence, 91 residues long: Small ribosomal subunit protein bS18 (91 aa).

The span at 1-14 (MTNQNQSQTQTTQT) shows a compositional bias: low complexity. The disordered stretch occupies residues 1–24 (MTNQNQSQTQTTQTVEKVSSRQKK).

The protein belongs to the bacterial ribosomal protein bS18 family. In terms of assembly, part of the 30S ribosomal subunit. Forms a tight heterodimer with protein bS6.

Its function is as follows. Binds as a heterodimer with protein bS6 to the central domain of the 16S rRNA, where it helps stabilize the platform of the 30S subunit. This Caldicellulosiruptor saccharolyticus (strain ATCC 43494 / DSM 8903 / Tp8T 6331) protein is Small ribosomal subunit protein bS18.